The primary structure comprises 596 residues: Fructan 1-exohydrolase (596 aa).

The signal sequence occupies residues 1 to 20 (MAQAWAFLLPVLVLGSYVTS). Asp-75 is an active-site residue. 3 N-linked (GlcNAc...) asparagine glycosylation sites follow: Asn-168, Asn-236, and Asn-248. Cys-446 and Cys-492 form a disulfide bridge. A glycan (N-linked (GlcNAc...) asparagine) is linked at Asn-567.

Belongs to the glycosyl hydrolase 32 family.

It catalyses the reaction Hydrolysis of terminal, non-reducing (2-&gt;1)-linked beta-D-fructofuranose residues in fructans.. Inhibited by sucrose. Its function is as follows. Hydrolyzes inulin-type beta-(2,1)-fructans. May play a role as a beta-(2,1)-trimmer during graminan biosynthesis. The chain is Fructan 1-exohydrolase from Aegilops tauschii (Tausch's goatgrass).